Here is a 234-residue protein sequence, read N- to C-terminus: Mannose/glucose-specific lectin Cramoll (234 aa).

The Mn(2+) site is built by glutamate 8 and aspartate 10. 4 residues coordinate Ca(2+): aspartate 10, tyrosine 12, asparagine 14, and aspartate 19. Residue tyrosine 12 coordinates a carbohydrate. Residues aspartate 19, histidine 24, and serine 34 each coordinate Mn(2+). An a carbohydrate-binding site is contributed by 99 to 100 (LY). Position 205 (aspartate 205) interacts with Ca(2+). Arginine 225 contributes to the a carbohydrate binding site.

This sequence belongs to the leguminous lectin family. As to quaternary structure, homotetramer. Post-translationally, the alpha and beta chains are produced by partial proteolytic processing of the lectin precursor by an asparaginyl endopeptidase.

Its function is as follows. Glucose/D-mannose specific lectin. This Cratylia mollis (Camaratu bean) protein is Mannose/glucose-specific lectin Cramoll.